Consider the following 89-residue polypeptide: Long neurotoxin homolog NTL2 (89 aa).

Residues 1–21 (MKTLLLSLVVVIIVCLDLGYT) form the signal peptide. Disulfide bonds link Cys24-Cys45, Cys27-Cys32, Cys38-Cys66, Cys70-Cys81, and Cys82-Cys87. The Cell attachment site motif lies at 54-56 (RGD).

Belongs to the three-finger toxin family. Ancestral subfamily. Orphan group V sub-subfamily. In terms of tissue distribution, expressed by the venom gland.

It is found in the secreted. Exhibits M2 muscarinic acetylcholine receptor (CHRM2)-blocking activity, but has a weak binding activity toward nicotinic AChR. Moreover, it inhibits collagen-induced platelet aggregation. In Bungarus multicinctus (Many-banded krait), this protein is Long neurotoxin homolog NTL2.